The sequence spans 199 residues: 7-methyl-GTP pyrophosphatase (199 aa).

Asp-73 functions as the Proton acceptor in the catalytic mechanism.

It belongs to the Maf family. YceF subfamily. Requires a divalent metal cation as cofactor.

The protein localises to the cytoplasm. The enzyme catalyses N(7)-methyl-GTP + H2O = N(7)-methyl-GMP + diphosphate + H(+). Nucleoside triphosphate pyrophosphatase that hydrolyzes 7-methyl-GTP (m(7)GTP). May have a dual role in cell division arrest and in preventing the incorporation of modified nucleotides into cellular nucleic acids. The polypeptide is 7-methyl-GTP pyrophosphatase (Bordetella bronchiseptica (strain ATCC BAA-588 / NCTC 13252 / RB50) (Alcaligenes bronchisepticus)).